The sequence spans 755 residues: LIM domain and actin-binding protein 1 (755 aa).

An N-acetylmethionine modification is found at methionine 1. Serine 15 carries the phosphoserine modification. A compositionally biased stretch (basic and acidic residues) spans 43 to 56 (KAAEEANMERKKNN). The segment at 43-151 (KAAEEANMER…YPRSEDSHDF (109 aa)) is disordered. Polar residues predominate over residues 88-97 (DSLPNSSSDG). Serine 132 bears the Phosphoserine mark. The Required for interaction with NPC1L1 signature appears at 164–166 (CLG). Basic and acidic residues-rich tracts occupy residues 168 to 177 (SRHEAEKPEM) and 199 to 208 (MMFEKGEHSQ). Residues 168-226 (SRHEAEKPEMSENTETSGKIEKYNVPLNRLKMMFEKGEHSQNKSPWTQGRNAGGRRLSE) form a disordered region. Phosphoserine is present on residues serine 225, serine 230, and serine 242. The segment at 241–379 (LSSSAFNSEK…ESSPSKTAKK (139 aa)) is disordered. Residues 249–258 (EKNESKRNLE) show a composition bias toward basic and acidic residues. Serine 263 is subject to Phosphoserine. Positions 292–305 (KPSESKTHKWEQKE) are enriched in basic and acidic residues. Residues 342–354 (CNSQGRSEAQQPI) are compositionally biased toward polar residues. Phosphoserine occurs at positions 348, 360, 367, and 372. Positions 363 to 375 (ARTSSLPESSPSK) are enriched in polar residues. Residues 386-446 (ESCVECQKTV…KPHFNQLFKS (61 aa)) form the LIM zinc-binding domain. Residue lysine 437 is modified to N6-succinyllysine. Disordered regions lie at residues 468–493 (ENEE…GVED) and 505–714 (SMEA…DTTT). At serine 488 the chain carries Phosphoserine. A required for interaction with MYO5B region spans residues 491–511 (VEDAPIAKVGVLAASMEAKAS). Composition is skewed to basic and acidic residues over residues 512–526 (SQRE…ETKK) and 555–566 (WPPEDEVCKTEA). Over residues 599-611 (SSVKSPKPLSPSL) the composition is skewed to low complexity. 4 positions are modified to phosphoserine: serine 600, serine 603, serine 608, and serine 616. Basic and acidic residues-rich tracts occupy residues 638–653 (RPSR…RWQS) and 662–673 (EAPRGRDGRSFE). 3 positions are modified to phosphoserine: serine 697, serine 722, and serine 737.

In terms of assembly, interacts with NPC1L1; bridges NPC1L1 with MYO5B. Interacts with MYO5B; bridges MYO5B with NPC1L1. Interacts with PXN; this complex stabilizes actin dynamics. Interacts with F-actin and G-actin. Interacts with LUZP1 (via C-terminus); both proteins restrict ciliation and may work together to regulate this process. Binds RAB40B (GTP-bound); interaction influences LIMA1 subcellular localization in lamellipodia during cell migration. In terms of processing, phosphorylation of the C-terminal region by MAPK1/MAPK3 reduces its association with F-actin and contributes to actin filament reorganization and enhanced cell motility. Post-translationally, ubiquitinated by the ECS(RAB40B) complex leading to its degradation. As to expression, expressed throughout the kidney, including renal cortex, medulla, and glomeruli. Expressed in glomeruli, tubular epithelial cells, and extraglomerular vascular endothelial cells (at protein level).

The protein localises to the cytoplasm. It localises to the cell junction. The protein resides in the focal adhesion. Its subcellular location is the cytoskeleton. It is found in the stress fiber. The protein localises to the cell membrane. It localises to the cell projection. The protein resides in the ruffle. Its subcellular location is the lamellipodium. Actin-binding protein involved in actin cytoskeleton regulation and dynamics. Increases the number and size of actin stress fibers and inhibits membrane ruffling. Inhibits actin filament depolymerization. Bundles actin filaments, delays filament nucleation and reduces formation of branched filaments. Acts as a negative regulator of primary cilium formation. Plays a role in cholesterol homeostasis. Influences plasma cholesterol levels through regulation of intestinal cholesterol absorption. May act as a scaffold protein by regulating NPC1L1 transportation, an essential protein for cholesterol absorption, to the plasma membrane by recruiting MYO5B to NPC1L1, and thus facilitates cholesterol uptake. This is LIM domain and actin-binding protein 1 from Rattus norvegicus (Rat).